A 647-amino-acid chain; its full sequence is Threonine--tRNA ligase (647 aa).

Residues 1–61 (MIKITFPDGA…TEDGAIEIVT (61 aa)) form the TGS domain. The tract at residues 242 to 540 (DHRKLGKELD…LIENYKGAFP (299 aa)) is catalytic. 3 residues coordinate Zn(2+): cysteine 336, histidine 387, and histidine 517.

It belongs to the class-II aminoacyl-tRNA synthetase family. As to quaternary structure, homodimer. The cofactor is Zn(2+).

The protein localises to the cytoplasm. The catalysed reaction is tRNA(Thr) + L-threonine + ATP = L-threonyl-tRNA(Thr) + AMP + diphosphate + H(+). Functionally, catalyzes the attachment of threonine to tRNA(Thr) in a two-step reaction: L-threonine is first activated by ATP to form Thr-AMP and then transferred to the acceptor end of tRNA(Thr). Also edits incorrectly charged L-seryl-tRNA(Thr). This Streptococcus sanguinis (strain SK36) protein is Threonine--tRNA ligase.